We begin with the raw amino-acid sequence, 237 residues long: uncharacterized protein (237 aa).

This is an uncharacterized protein from Dictyostelium discoideum (Social amoeba).